The sequence spans 402 residues: Probable peptidoglycan glycosyltransferase FtsW (402 aa).

Over 1–24 (MLYRLKLLLSGQNTKKERVRAKLE) the chain is Cytoplasmic. A helical membrane pass occupies residues 25–45 (IDISIVFVMLGLLIFGWVMVT). The Periplasmic portion of the chain corresponds to 46 to 63 (SASMVVALDDYNNPYFYS). The helical transmembrane segment at 64-84 (IRQGFFAVIAIFLFLLALLVP) threads the bilayer. Residues 85–91 (TKNYEKN) are Cytoplasmic-facing. The helical transmembrane segment at 92–112 (YNAFFFIMLIVLVAVLVPGVG) threads the bilayer. Residues 113–121 (KSVNGARRW) lie on the Periplasmic side of the membrane. The helical transmembrane segment at 122 to 142 (IPLIIINIQVAELAKLLAIIF) threads the bilayer. Topologically, residues 143 to 160 (FSGYIAENLPKMTNFKEG) are cytoplasmic. A run of 2 helical transmembrane segments spans residues 161–181 (ILTPITLLGCIAVLLLMQPDF) and 182–202 (GSTVVISICVMGMLFVSGNKV). Arginine 203 is a topological domain (cytoplasmic). The helical transmembrane segment at 204-224 (WYGLLIGAMLIMATMLVIISP) threads the bilayer. Topologically, residues 225 to 284 (YRMHRITGFLHPWENANGSGYQLVQALIGFGRGGWFGDGLGNGVQKQFFLPEAHTDFITS) are periplasmic. A helical transmembrane segment spans residues 285–305 (VIAEEIGVIGLMILLMVYLFI). Residues 306-324 (VFRAMNIAKMAFELKRYYQ) lie on the Cytoplasmic side of the membrane. A helical membrane pass occupies residues 325–345 (AFLSYGISFWIGFQVFVNIGV). The Periplasmic portion of the chain corresponds to 346–357 (NTGLLPTKGLTL). The chain crosses the membrane as a helical span at residues 358-378 (PLISYGGSSLLIMCFTLGILV). The Cytoplasmic portion of the chain corresponds to 379-402 (RVDFENKLLADTINPKYIYKKVRK).

Belongs to the SEDS family. FtsW subfamily.

The protein resides in the cell inner membrane. The enzyme catalyses [GlcNAc-(1-&gt;4)-Mur2Ac(oyl-L-Ala-gamma-D-Glu-L-Lys-D-Ala-D-Ala)](n)-di-trans,octa-cis-undecaprenyl diphosphate + beta-D-GlcNAc-(1-&gt;4)-Mur2Ac(oyl-L-Ala-gamma-D-Glu-L-Lys-D-Ala-D-Ala)-di-trans,octa-cis-undecaprenyl diphosphate = [GlcNAc-(1-&gt;4)-Mur2Ac(oyl-L-Ala-gamma-D-Glu-L-Lys-D-Ala-D-Ala)](n+1)-di-trans,octa-cis-undecaprenyl diphosphate + di-trans,octa-cis-undecaprenyl diphosphate + H(+). It functions in the pathway cell wall biogenesis; peptidoglycan biosynthesis. In terms of biological role, peptidoglycan polymerase that is essential for cell division. The polypeptide is Probable peptidoglycan glycosyltransferase FtsW (Francisella salina).